Consider the following 244-residue polypeptide: UPF0280 protein MJ1526 (244 aa).

It belongs to the UPF0280 family.

This chain is UPF0280 protein MJ1526, found in Methanocaldococcus jannaschii (strain ATCC 43067 / DSM 2661 / JAL-1 / JCM 10045 / NBRC 100440) (Methanococcus jannaschii).